The sequence spans 309 residues: p-hydroxybenzoic acid efflux pump subunit AaeA (309 aa).

Residues 12–32 (AITVVLVILAFIAIFNAWVYY) form a helical membrane-spanning segment.

The protein belongs to the membrane fusion protein (MFP) (TC 8.A.1) family.

It is found in the cell inner membrane. Forms an efflux pump with AaeB. The chain is p-hydroxybenzoic acid efflux pump subunit AaeA from Escherichia coli O157:H7.